A 383-amino-acid polypeptide reads, in one-letter code: Queuine tRNA-ribosyltransferase (383 aa).

Aspartate 90 functions as the Proton acceptor in the catalytic mechanism. Residues 90 to 94 (DSGGF), aspartate 144, glutamine 193, and glycine 227 each bind substrate. Positions 258–264 (GVGTPED) are RNA binding. Aspartate 277 acts as the Nucleophile in catalysis. The segment at 282-286 (TRNAR) is RNA binding; important for wobble base 34 recognition. The Zn(2+) site is built by cysteine 315, cysteine 317, cysteine 320, and histidine 346.

The protein belongs to the queuine tRNA-ribosyltransferase family. Homodimer. Within each dimer, one monomer is responsible for RNA recognition and catalysis, while the other monomer binds to the replacement base PreQ1. Zn(2+) is required as a cofactor.

The enzyme catalyses 7-aminomethyl-7-carbaguanine + guanosine(34) in tRNA = 7-aminomethyl-7-carbaguanosine(34) in tRNA + guanine. The protein operates within tRNA modification; tRNA-queuosine biosynthesis. Catalyzes the base-exchange of a guanine (G) residue with the queuine precursor 7-aminomethyl-7-deazaguanine (PreQ1) at position 34 (anticodon wobble position) in tRNAs with GU(N) anticodons (tRNA-Asp, -Asn, -His and -Tyr). Catalysis occurs through a double-displacement mechanism. The nucleophile active site attacks the C1' of nucleotide 34 to detach the guanine base from the RNA, forming a covalent enzyme-RNA intermediate. The proton acceptor active site deprotonates the incoming PreQ1, allowing a nucleophilic attack on the C1' of the ribose to form the product. After dissociation, two additional enzymatic reactions on the tRNA convert PreQ1 to queuine (Q), resulting in the hypermodified nucleoside queuosine (7-(((4,5-cis-dihydroxy-2-cyclopenten-1-yl)amino)methyl)-7-deazaguanosine). The chain is Queuine tRNA-ribosyltransferase from Ralstonia pickettii (strain 12J).